The chain runs to 244 residues: Phosphoadenosine 5'-phosphosulfate reductase (244 aa).

The active-site Nucleophile; cysteine thiosulfonate intermediate is Cys239.

The protein belongs to the PAPS reductase family. CysH subfamily.

Its subcellular location is the cytoplasm. It carries out the reaction [thioredoxin]-disulfide + sulfite + adenosine 3',5'-bisphosphate + 2 H(+) = [thioredoxin]-dithiol + 3'-phosphoadenylyl sulfate. It functions in the pathway sulfur metabolism; hydrogen sulfide biosynthesis; sulfite from sulfate: step 3/3. Its function is as follows. Catalyzes the formation of sulfite from phosphoadenosine 5'-phosphosulfate (PAPS) using thioredoxin as an electron donor. The sequence is that of Phosphoadenosine 5'-phosphosulfate reductase from Serratia proteamaculans (strain 568).